The primary structure comprises 153 residues: Large ribosomal subunit protein uL15 (153 aa).

The disordered stretch occupies residues 15 to 42; it reads ARRIVGRGSSSGRGTTSGRGTKGQQARA. Residues 23–35 are compositionally biased toward gly residues; that stretch reads SSSGRGTTSGRGT.

Belongs to the universal ribosomal protein uL15 family. In terms of assembly, part of the 50S ribosomal subunit.

Functionally, binds to the 23S rRNA. This is Large ribosomal subunit protein uL15 from Treponema pallidum (strain Nichols).